The following is an 847-amino-acid chain: DNA mismatch repair protein MutS (847 aa).

603-610 (GPNMSGKS) is an ATP binding site.

Belongs to the DNA mismatch repair MutS family.

Its function is as follows. This protein is involved in the repair of mismatches in DNA. It is possible that it carries out the mismatch recognition step. This protein has a weak ATPase activity. This is DNA mismatch repair protein MutS from Streptococcus suis (strain 98HAH33).